The following is a 215-amino-acid chain: Glutathione S-transferase F9 (215 aa).

The 80-residue stretch at 2–81 (VLKVYGPHFA…YVAEKYRSQG (80 aa)) folds into the GST N-terminal domain. Position 11 to 12 (11 to 12 (AS)) interacts with glutathione. Ser12 bears the Phosphoserine mark. Met35 carries the post-translational modification Methionine sulfoxide. Glutathione-binding positions include 39–40 (HK), 52–53 (TV), and 65–66 (ES). The GST C-terminal domain occupies 88-215 (TVEDRGQVEQ…ETVAKYSFPA (128 aa)). Residues Met118, Met123, and Met184 each carry the methionine sulfoxide modification.

Belongs to the GST superfamily. Phi family. Oxidated at Met-35, Met-118, Met-123 and Met-184 in oxidative stress conditions (e.g. hydrogen peroxide H(2)O(2)).

It localises to the cytoplasm. The protein localises to the cytosol. It catalyses the reaction RX + glutathione = an S-substituted glutathione + a halide anion + H(+). Its activity is regulated as follows. Redox-regulated enzyme; in oxidative stress conditions methionine oxidation ensure a thermodynamic and structural compensatory mechanism to guarantee H(2)O(2) peroxidase activity despite transferase activity inhibition. Its function is as follows. In vitro, possesses glutathione S-transferase activity toward 1-chloro-2,4-dinitrobenzene (CDNB) and benzyl isothiocyanate (BITC), and glutathione peroxidase activity toward cumene hydroperoxide and linoleic acid-13-hydroperoxide. May be involved in the conjugation of reduced glutathione to a wide number of exogenous and endogenous hydrophobic electrophiles and have a detoxification role against certain herbicides. This chain is Glutathione S-transferase F9, found in Arabidopsis thaliana (Mouse-ear cress).